The chain runs to 333 residues: MSSTSLPSSGKPLKLRINRDSEGYLSLVTESGEIYRCPICGNDRFVYNYERGEVVCIVCGAVVQEQLLDLGPEWRAFTSEEKGQRARTGAPLTRLISEALTTVIDWRDKDVSGRELDIKRKLEVIRLRKWQTRARVQTSYERNFIQAAQELERLKSSMGVPRPCVEQALEIYRQALEKELVRGRSVEAMAAAALYMACRMMRMPRPLDELVRYTKASRREVARCYRLLLRELNVKVPISDPVLYISRIAEQLKLSGEVVKAAIDILQRAKKAGITAGKDPAGLAAAAVYIASLMHGDNRTQKDFAVAAGVTEVTVRNRYKELAKALNIKVPVK.

The segment at 33–64 adopts a TFIIB-type zinc-finger fold; that stretch reads EIYRCPICGNDRFVYNYERGEVVCIVCGAVVQ. Residues cysteine 37, cysteine 40, cysteine 56, and cysteine 59 each contribute to the Zn(2+) site. 2 tandem repeats follow at residues 149 to 232 and 243 to 324.

It belongs to the TFIIB family.

Stabilizes TBP binding to an archaeal box-A promoter. Also responsible for recruiting RNA polymerase II to the pre-initiation complex (DNA-TBP-TFIIB). This is Transcription initiation factor IIB from Pyrobaculum arsenaticum (strain DSM 13514 / JCM 11321 / PZ6).